The primary structure comprises 212 residues: Probable octanoyltransferase (212 aa).

The region spanning 28–199 (GVSEEMILVT…NLETLLQRQE (172 aa)) is the BPL/LPL catalytic domain. Substrate-binding positions include 66–73 (RGGDATYH), 130–132 (SVG), and 143–145 (GVA). Residue Cys161 is the Acyl-thioester intermediate of the active site.

This sequence belongs to the LipB family.

The protein localises to the cytoplasm. It catalyses the reaction octanoyl-[ACP] + L-lysyl-[protein] = N(6)-octanoyl-L-lysyl-[protein] + holo-[ACP] + H(+). It participates in protein modification; protein lipoylation via endogenous pathway; protein N(6)-(lipoyl)lysine from octanoyl-[acyl-carrier-protein]: step 1/2. Catalyzes the transfer of endogenously produced octanoic acid from octanoyl-acyl-carrier-protein onto the lipoyl domains of lipoate-dependent enzymes. Lipoyl-ACP can also act as a substrate although octanoyl-ACP is likely to be the physiological substrate. This Pyrobaculum arsenaticum (strain DSM 13514 / JCM 11321 / PZ6) protein is Probable octanoyltransferase.